Here is a 201-residue protein sequence, read N- to C-terminus: MAEQKNPLTTPSPNADTTIVPAGSPHTHTEQPSGGHGGAFPPFESHTFLSQLIWLALAFGLLYYLMSKVALPRIEAILGNRAGRLSSDLTEAQRMKTEADAAGAAYEKSLREAQAKAQAIAQETRNSLSAEADAKRKTLEAELNQRLAASEATIRTRTTEAMGNVRAIAGETASAIVERLTGQAPDQASLNRALDATPAVH.

Polar residues predominate over residues 1 to 17 (MAEQKNPLTTPSPNADT). A disordered region spans residues 1–39 (MAEQKNPLTTPSPNADTTIVPAGSPHTHTEQPSGGHGGA). A helical transmembrane segment spans residues 47-66 (TFLSQLIWLALAFGLLYYLM).

Belongs to the ATPase B chain family. As to quaternary structure, F-type ATPases have 2 components, F(1) - the catalytic core - and F(0) - the membrane proton channel. F(1) has five subunits: alpha(3), beta(3), gamma(1), delta(1), epsilon(1). F(0) has three main subunits: a(1), b(2) and c(10-14). The alpha and beta chains form an alternating ring which encloses part of the gamma chain. F(1) is attached to F(0) by a central stalk formed by the gamma and epsilon chains, while a peripheral stalk is formed by the delta and b chains.

Its subcellular location is the cell inner membrane. In terms of biological role, f(1)F(0) ATP synthase produces ATP from ADP in the presence of a proton or sodium gradient. F-type ATPases consist of two structural domains, F(1) containing the extramembraneous catalytic core and F(0) containing the membrane proton channel, linked together by a central stalk and a peripheral stalk. During catalysis, ATP synthesis in the catalytic domain of F(1) is coupled via a rotary mechanism of the central stalk subunits to proton translocation. Its function is as follows. Component of the F(0) channel, it forms part of the peripheral stalk, linking F(1) to F(0). The b'-subunit is a diverged and duplicated form of b found in plants and photosynthetic bacteria. The polypeptide is ATP synthase subunit b 2 (atpF2) (Methylorubrum extorquens (strain PA1) (Methylobacterium extorquens)).